The chain runs to 383 residues: MLVSPTAAATSIEQQTIRDLRSIVPQIDNLNDGYVLRWLRAKEGRFDETAESLKKHVTFRNAWHLDKIEQWTPPECLEKYCGYGLLGDTEGRPILMSLLGNVDVEGLLRSVASLDYIKFSLAAIEKGMKLCEEKAKESGRPFEQMTLVFDLENITSAHFSCKQFASSFTTLVSLFQDHYPLFLRKILIIRAPEMARIAYASITAILQDPITRLVEMPSESDWKWSLAQIVNLDAWPMYWGGNLVENGDPKCPSRIKYGGGAVDESYFVDPKKAMADYDQLTTVYAGDKHLIQIKVKRPSRISWTYMTDEDDIGFEIHYDKTGSCDKLTEMETVYPYIRLECTNVPITGHLDVTDVGNYVLEFDNYYSWFSAKQLRYNIEIEDL.

The CRAL-TRIO domain maps to Pro-73–Gly-247. The 110-residue stretch at Lys-271–Ile-380 folds into the GOLD domain.

In terms of tissue distribution, highly expressed in cells of the pi uterine cell lineage.

It is found in the cytoplasm. Its subcellular location is the cytosol. Its function is as follows. Vesicle trafficking protein. Functions in uterine cells to promote basement membrane (BM) mobility and BM gap formation during tissue remodeling. The chain is Protein ctg-1 from Caenorhabditis elegans.